The primary structure comprises 486 residues: N-succinylglutamate 5-semialdehyde dehydrogenase (486 aa).

NAD(+) is bound at residue 220–225; sequence GSSRTG. Catalysis depends on residues Glu243 and Cys277.

It belongs to the aldehyde dehydrogenase family. AstD subfamily.

It catalyses the reaction N-succinyl-L-glutamate 5-semialdehyde + NAD(+) + H2O = N-succinyl-L-glutamate + NADH + 2 H(+). Its pathway is amino-acid degradation; L-arginine degradation via AST pathway; L-glutamate and succinate from L-arginine: step 4/5. Functionally, catalyzes the NAD-dependent reduction of succinylglutamate semialdehyde into succinylglutamate. This Shewanella frigidimarina (strain NCIMB 400) protein is N-succinylglutamate 5-semialdehyde dehydrogenase.